The chain runs to 198 residues: FMN-dependent NADH:quinone oxidoreductase (198 aa).

Residues Ser10, 16–18 (SQS), 94–97 (MYNF), and 138–141 (TRGG) each bind FMN.

The protein belongs to the azoreductase type 1 family. Homodimer. FMN serves as cofactor.

It carries out the reaction 2 a quinone + NADH + H(+) = 2 a 1,4-benzosemiquinone + NAD(+). It catalyses the reaction N,N-dimethyl-1,4-phenylenediamine + anthranilate + 2 NAD(+) = 2-(4-dimethylaminophenyl)diazenylbenzoate + 2 NADH + 2 H(+). Functionally, quinone reductase that provides resistance to thiol-specific stress caused by electrophilic quinones. Its function is as follows. Also exhibits azoreductase activity. Catalyzes the reductive cleavage of the azo bond in aromatic azo compounds to the corresponding amines. This Shewanella baltica (strain OS185) protein is FMN-dependent NADH:quinone oxidoreductase.